The sequence spans 321 residues: Agamous-like MADS-box protein AGL80 (321 aa).

An MADS-box domain is found at 1 to 61 (MTRKKVKLAY…DTNPEVWPSN (61 aa)). A coiled-coil region spans residues 89-114 (FLKQRIAKATETLRRQRKDSRELEMT).

As to quaternary structure, interacts with AGL61 and AGL62. Forms a heterodimer with AGL61. Interacts with MEE14/CBP1. In terms of tissue distribution, expressed in the central cell of the female gametophyte and in early endosperm. Also detected in ovaries, young siliques, roots, leaves, stems, young flowers and anthers.

The protein localises to the nucleus. Its function is as follows. Probable transcription factor. Controls central cell differentiation during female gametophyte development. Required for the expression of DEMETER and DD46, but not for the expression of FIS2. Probable transcription factor that may function in the maintenance of the proper function of the central cell in pollen tube attraction. This Arabidopsis thaliana (Mouse-ear cress) protein is Agamous-like MADS-box protein AGL80 (AGL80).